Consider the following 316-residue polypeptide: Transaldolase (316 aa).

K132 (schiff-base intermediate with substrate) is an active-site residue.

This sequence belongs to the transaldolase family. Type 1 subfamily. Homodimer.

It is found in the cytoplasm. It catalyses the reaction D-sedoheptulose 7-phosphate + D-glyceraldehyde 3-phosphate = D-erythrose 4-phosphate + beta-D-fructose 6-phosphate. It participates in carbohydrate degradation; pentose phosphate pathway; D-glyceraldehyde 3-phosphate and beta-D-fructose 6-phosphate from D-ribose 5-phosphate and D-xylulose 5-phosphate (non-oxidative stage): step 2/3. Transaldolase is important for the balance of metabolites in the pentose-phosphate pathway. This chain is Transaldolase, found in Vibrio parahaemolyticus serotype O3:K6 (strain RIMD 2210633).